We begin with the raw amino-acid sequence, 206 residues long: Urease accessory protein UreG (206 aa).

11–18 (GPVGSGKT) is a GTP binding site.

Belongs to the SIMIBI class G3E GTPase family. UreG subfamily. As to quaternary structure, homodimer. UreD, UreF and UreG form a complex that acts as a GTP-hydrolysis-dependent molecular chaperone, activating the urease apoprotein by helping to assemble the nickel containing metallocenter of UreC. The UreE protein probably delivers the nickel.

The protein resides in the cytoplasm. Functionally, facilitates the functional incorporation of the urease nickel metallocenter. This process requires GTP hydrolysis, probably effectuated by UreG. The chain is Urease accessory protein UreG from Mycolicibacterium gilvum (strain PYR-GCK) (Mycobacterium gilvum (strain PYR-GCK)).